The primary structure comprises 244 residues: Protein pendolino (244 aa).

The UBC core domain maps to 20-176; it reads QQEYKILAEY…VQENIKESKE (157 aa).

It belongs to the ubiquitin-conjugating enzyme family. FTS subfamily. Interacts (via N-terminus) with cav/HOAP (via N-terminus); the interaction is direct. Probably interacts (via N-terminus and UBC domain) with ver and moi.

It localises to the nucleus. It is found in the nucleolus. The protein resides in the chromosome. Functionally, required for efficient DNA replication, probably through involvement in telomere replication. May have a role in telomere capping of heterochromatic chromosome ends. The sequence is that of Protein pendolino from Drosophila melanogaster (Fruit fly).